The primary structure comprises 526 residues: MSDNKVEVDKRRTFAIISHPDAGKTTITEKVLLFGNALQKAGTVKGKKSGQHAKSDWMEMEKDRGISITTSVMQFPYGGALVNLLDTPGHEDFSEDTYRTLTAVDSCLMVIDSAKGVEDRTIKLMEVTRLRDTPIVTFMNKLDRDIRDPIELMDEVEDVLNIACAPITWPIGSGKEFKGVYHILRDEVVLYQSGMGHTIQERRVIEGIDNPELDKAIGSYAADLRDEMELVRGASNEFDHQAFLKGELTPVFFGTALGNFGVDHILDGIVEWAPKPLPRESDARMIMPDEEKFTGFVFKIQANMDPKHRDRVAFMRVCSGRYEQGMKMHHVRIGKDVNVSDALTFMAGDRERAEVAYPGDIIGLHNHGTIRIGDTFTQGEKFRFTGVPNFAPEMFRRIRLRDPLKQKQLLKGLVQLSEEGAVQVFRPLDTNDLIVGAVGVLQFEVVVGRLKSEYNVEAIYEGISVSTARWVYCKDERKLEEFRRKCSQNLALDGGDNLTYIAPTMVNLNLSMERYPDIEFAKTREH.

Residues 9 to 277 (DKRRTFAIIS…GIVEWAPKPL (269 aa)) enclose the tr-type G domain. Residues 18-25 (SHPDAGKT), 86-90 (DTPGH), and 140-143 (NKLD) contribute to the GTP site.

Belongs to the TRAFAC class translation factor GTPase superfamily. Classic translation factor GTPase family. PrfC subfamily.

Its subcellular location is the cytoplasm. Functionally, increases the formation of ribosomal termination complexes and stimulates activities of RF-1 and RF-2. It binds guanine nucleotides and has strong preference for UGA stop codons. It may interact directly with the ribosome. The stimulation of RF-1 and RF-2 is significantly reduced by GTP and GDP, but not by GMP. The polypeptide is Peptide chain release factor 3 (Shewanella sp. (strain MR-4)).